The primary structure comprises 193 residues: MRLFGLILAGGEGRRMGGTDKASLTLGGRLLVTWVAERLGPQVEELAISANGDPARFAGLGLPVLRDEHPQGPLSGVLAGLRWAAAAGADALVTAPVDTPFVPGDLAPRLWLAGEGTCAVAEAGGRVHPACGLWPVAVAEDLAAWLAAGEARVMGFAARHGAARAGFPDENAFLNLNAPEDLARAESLLRKDA.

GTP-binding positions include 8–10 (LAG), Lys-21, Asp-67, and Asp-98. Asp-98 is a binding site for Mg(2+).

The protein belongs to the MobA family. As to quaternary structure, monomer. It depends on Mg(2+) as a cofactor.

The protein resides in the cytoplasm. It catalyses the reaction Mo-molybdopterin + GTP + H(+) = Mo-molybdopterin guanine dinucleotide + diphosphate. Its function is as follows. Transfers a GMP moiety from GTP to Mo-molybdopterin (Mo-MPT) cofactor (Moco or molybdenum cofactor) to form Mo-molybdopterin guanine dinucleotide (Mo-MGD) cofactor. In Cereibacter sphaeroides (strain ATCC 17023 / DSM 158 / JCM 6121 / CCUG 31486 / LMG 2827 / NBRC 12203 / NCIMB 8253 / ATH 2.4.1.) (Rhodobacter sphaeroides), this protein is Molybdenum cofactor guanylyltransferase.